The sequence spans 569 residues: 4-hydroxy-7-methoxy-3-oxo-3,4-dihydro-2H-1,4-benzoxazin-2-yl glucoside beta-D-glucosidase 1b, chloroplastic (569 aa).

The N-terminal 50 residues, 1 to 50, are a transit peptide targeting the chloroplast; sequence MALLAAATLNPTTHLSLRSRAGRNSENLWLRSTASSQKSKGRFCNLTIRA. A beta-D-glucoside contacts are provided by residues glutamine 92, histidine 194, and 239–240; that span reads NE. Glutamate 240 acts as the Proton donor in catalysis. A disulfide bridge links cysteine 259 with cysteine 265. A beta-D-glucoside-binding positions include tyrosine 383, glutamate 456, tryptophan 504, 511–512, and phenylalanine 520; that span reads EW. Glutamate 456 acts as the Nucleophile in catalysis.

Belongs to the glycosyl hydrolase 1 family. As to quaternary structure, homo- and heterohexamers. As to expression, expressed in young seedlings early after germination.

Its subcellular location is the plastid. The protein localises to the chloroplast. The enzyme catalyses Hydrolysis of terminal, non-reducing beta-D-glucosyl residues with release of beta-D-glucose.. It carries out the reaction DIMBOA beta-D-glucoside + H2O = DIMBOA + D-glucose. It catalyses the reaction DIBOA beta-D-glucoside + H2O = DIBOA + D-glucose. Functionally, acts in defense of young plant parts against pests via the production of hydroxamic acids from hydroxamic acid glucosides. Enzymatic activity is highly correlated with plant growth. The preferred substrate is DIMBOA-beta-D-glucoside. The polypeptide is 4-hydroxy-7-methoxy-3-oxo-3,4-dihydro-2H-1,4-benzoxazin-2-yl glucoside beta-D-glucosidase 1b, chloroplastic (GLU1B) (Triticum aestivum (Wheat)).